We begin with the raw amino-acid sequence, 350 residues long: Spermidine/putrescine import ATP-binding protein PotA (350 aa).

The 231-residue stretch at 6-236 (LELRNISKQY…PENLWTAQFI (231 aa)) folds into the ABC transporter domain. 38 to 45 (GPSGCGKT) contacts ATP.

Belongs to the ABC transporter superfamily. Spermidine/putrescine importer (TC 3.A.1.11.1) family. As to quaternary structure, the complex is composed of two ATP-binding proteins (PotA), two transmembrane proteins (PotB and PotC) and a solute-binding protein (PotD).

Its subcellular location is the cell membrane. It carries out the reaction ATP + H2O + polyamine-[polyamine-binding protein]Side 1 = ADP + phosphate + polyamineSide 2 + [polyamine-binding protein]Side 1.. Part of the ABC transporter complex PotABCD involved in spermidine/putrescine import. Responsible for energy coupling to the transport system. This Spiroplasma citri protein is Spermidine/putrescine import ATP-binding protein PotA.